The chain runs to 86 residues: Allergen Hum j 3 (86 aa).

This Humulus japonicus (Japanese hop) protein is Allergen Hum j 3.